Consider the following 165-residue polypeptide: Putative L,D-transpeptidase YkuD (165 aa).

A LysM domain is found at Leu-2–Ile-46. The L,D-TPase catalytic domain maps to Tyr-57–Thr-164. His-124 (proton donor/acceptor) is an active-site residue. Residue Cys-140 is the Nucleophile of the active site.

This sequence belongs to the YkuD family. Monomer.

Its subcellular location is the spore wall. The protein operates within cell wall biogenesis; peptidoglycan biosynthesis. Its function is as follows. Probable enzyme that may play an important role in cell wall biology. The sequence is that of Putative L,D-transpeptidase YkuD from Bacillus licheniformis (strain ATCC 14580 / DSM 13 / JCM 2505 / CCUG 7422 / NBRC 12200 / NCIMB 9375 / NCTC 10341 / NRRL NRS-1264 / Gibson 46).